The sequence spans 613 residues: UBX domain-containing protein 3 (613 aa).

Disordered stretches follow at residues 67 to 223 and 453 to 472; these read PAAA…PINP and MNEQ…RNQQ. Over residues 68–82 the composition is skewed to low complexity; sequence AAASGRNAGASSSSR. Over residues 137–149 the composition is skewed to basic residues; sequence THHRGAAIPRQKR. A compositionally biased stretch (low complexity) spans 158–169; sequence SSSGSSSASFSS. A coiled-coil region spans residues 452 to 517; that stretch reads RMNEQSERRE…EEEECVRRQT (66 aa). In terms of domain architecture, UBX spans 531–610; it reads PLAEIINVKF…KWPAREQIFV (80 aa). An Interaction with cdc-48 motif is present at residues 582–584; it reads FPK.

In terms of assembly, forms a complex composed of ubxn-3, cdc-48.1, ufd-1 and npl-4.1. Forms a complex composed of ubxn-3, cdc-48.1 and/or cdc-48.2 and substrate cdt-1. Interacts (via FPK motif) with cdc-48.1 (via N-terminus) and cdc-48.2 (via N-terminus). Interacts (via N-terminus) with cdt-1 and ubiquitinated protein substrates; the interaction is cdc-48-independent. May interact with npl-4.1. Expressed in the germline (at protein level). Expressed in spermatocytes but not in mature sperm (at protein level). Expressed in the spermatheca and nerve cells.

The protein localises to the nucleus. Its subcellular location is the cytoplasm. It localises to the perinuclear region. It is found in the chromosome. In terms of biological role, ubiquitin-binding protein which acts as an adapter for ATPase cdc-48.1 and/or cdc-48.2, conferring substrate specificity. Together with ubxn-1 and ubxn-2, plays a role in hermaphrodite spermatogenesis probably by promoting the degradation of sex determination terminal factor tra-1. During mitosis, ensures the degradation of DNA licensing factor cdt-1 and the disassembly of the DNA replication CMG helicase complex by promoting the dissociation from chromatin of several of its components including cdc-45 and sld-5. The polypeptide is UBX domain-containing protein 3 (Caenorhabditis elegans).